A 105-amino-acid polypeptide reads, in one-letter code: Small ribosomal subunit protein uS10 (105 aa).

Belongs to the universal ribosomal protein uS10 family. Part of the 30S ribosomal subunit.

Its function is as follows. Involved in the binding of tRNA to the ribosomes. This is Small ribosomal subunit protein uS10 from Bdellovibrio bacteriovorus (strain ATCC 15356 / DSM 50701 / NCIMB 9529 / HD100).